A 462-amino-acid polypeptide reads, in one-letter code: Chromosomal replication initiator protein DnaA (462 aa).

Residues 1-83 (MSLSLWQQCL…LRFEVGSKPA (83 aa)) are domain I, interacts with DnaA modulators. The segment at 83-125 (AARAHNNPVTASVSAPVAPVTRSAPMRPSWDNSPAQPELSYRS) is domain II. Residues 104 to 125 (RSAPMRPSWDNSPAQPELSYRS) are disordered. Polar residues predominate over residues 112 to 125 (WDNSPAQPELSYRS). The interval 126–342 (NVNPKHTFDN…GALNRVIANA (217 aa)) is domain III, AAA+ region. 4 residues coordinate ATP: Gly-170, Gly-172, Lys-173, and Thr-174. A domain IV, binds dsDNA region spans residues 343–462 (NFTGRAITID…FSNLIRTLSS (120 aa)).

The protein belongs to the DnaA family. As to quaternary structure, oligomerizes as a right-handed, spiral filament on DNA at oriC.

It localises to the cytoplasm. Functionally, plays an essential role in the initiation and regulation of chromosomal replication. ATP-DnaA binds to the origin of replication (oriC) to initiate formation of the DNA replication initiation complex once per cell cycle. Binds the DnaA box (a 9 base pair repeat at the origin) and separates the double-stranded (ds)DNA. Forms a right-handed helical filament on oriC DNA; dsDNA binds to the exterior of the filament while single-stranded (ss)DNA is stabiized in the filament's interior. The ATP-DnaA-oriC complex binds and stabilizes one strand of the AT-rich DNA unwinding element (DUE), permitting loading of DNA polymerase. After initiation quickly degrades to an ADP-DnaA complex that is not apt for DNA replication. Binds acidic phospholipids. This Yersinia pseudotuberculosis serotype O:1b (strain IP 31758) protein is Chromosomal replication initiator protein DnaA.